The following is a 720-amino-acid chain: Collectin-12 (720 aa).

The Cytoplasmic portion of the chain corresponds to 1 to 37; the sequence is MKDDFNDEEEVQSFGYKRFGIQEGNECTKCKNDWALR. Residues 38 to 58 form a helical; Signal-anchor for type II membrane protein membrane-spanning segment; the sequence is VAIALLYVLCALLTIAVAVLG. At 59–720 the chain is on the extracellular side; the sequence is YKVVQRMDNV…RTNESKVPVL (662 aa). Coiled-coil stretches lie at residues 95 to 120, 216 to 267, and 377 to 408; these read EKSE…QLSD, ISSL…LAAN, and LHGL…LDKE. A disordered region spans residues 433–576; sequence FTILQGPPGP…GPPGLPGLPA (144 aa). Collagen-like domains lie at 444–503 and 510–569; these read GPRG…PGPK and GRQG…PGPP. A compositionally biased stretch (basic and acidic residues) spans 460 to 479; it reads PKGEKGEKGAPGDAGPKGEK. Over residues 488-503 the composition is skewed to low complexity; it reads PGLKGPPGSRGSPGPK. Over residues 504–513 the composition is skewed to gly residues; that stretch reads GSRGSGGRQG. Positions 527–560 are enriched in low complexity; the sequence is PGRDGQPGPTGPQGPQGLRGPAGPAGLEGARGPV. Residues 562-576 show a composition bias toward pro residues; that stretch reads PIGPPGPPGLPGLPA. Disulfide bonds link C604–C615, C634–C709, and C687–C701. The C-type lectin domain maps to 611 to 710; sequence FREQCYHFSA…CTERIGFICE (100 aa). Ca(2+) is bound by residues I643, N645, and E649. 3 residues coordinate a carbohydrate: K670, Q673, and D675. Residues Q673, D675, N676, E685, D686, N697, D698, and E710 each contribute to the Ca(2+) site. Position 685 (E685) interacts with a carbohydrate. A carbohydrate is bound by residues N697 and D698.

The protein resides in the membrane. Functionally, scavenger receptor that displays several functions associated with host defense. Binds to carbohydrates. This chain is Collectin-12 (colec12), found in Danio rerio (Zebrafish).